The following is a 294-amino-acid chain: Protein huluwa (294 aa).

Residues 1-23 (MSQLGSAVPSSNLPEGLPVSSLA) lie on the Extracellular side of the membrane. Residues 24–44 (LLILVLIPCVLLLLLLNCLFV) traverse the membrane as a helical segment. The Cytoplasmic segment spans residues 45–294 (GYKLFRMTRR…PPITTKQYWV (250 aa)). The tract at residues 154 to 175 (SDSDMERVNTVPPNSPVLRVTP) is disordered. The short motif at 164–169 (VPPNSP) is the VPPNSP motif element. The SLRRSST motif signature appears at 184-190 (SLRRSST).

It belongs to the huluwa family. As to quaternary structure, interacts with axin1; leading to promote the tankyrase-mediated degradation of axin. Interacts with axin2; leading to promote the tankyrase-mediated degradation of axin.

It is found in the cell membrane. Its function is as follows. Key maternal determinant of the dorsal organizer and body axis formation in vertebrates that acts by promoting stabilization of beta-catenin (ctnnb1). Localizes on the plasma membrane of the future dorsal blastomeres in early blastulas and binds to and promotes the tankyrase-mediated degradation of axin (axin1 and axin2). Axin degradation results in stabilization and nuclear translocation of beta-catenin (ctnnb1) for activating organizer-specific target gene expression. The protein is Protein huluwa of Danio rerio (Zebrafish).